The primary structure comprises 295 residues: Iron-sulfur cluster carrier protein (295 aa).

Position 38 to 45 (38 to 45 (GKGGVGKS)) interacts with ATP.

This sequence belongs to the Mrp/NBP35 ATP-binding proteins family. Homodimer.

In terms of biological role, binds and transfers iron-sulfur (Fe-S) clusters to target apoproteins. Can hydrolyze ATP. This Pyrococcus horikoshii (strain ATCC 700860 / DSM 12428 / JCM 9974 / NBRC 100139 / OT-3) protein is Iron-sulfur cluster carrier protein.